A 414-amino-acid polypeptide reads, in one-letter code: Phosphopentomutase (414 aa).

The Mn(2+) site is built by Asp-10, Asp-309, His-314, Asp-350, His-351, and His-362.

It belongs to the phosphopentomutase family. Requires Mn(2+) as cofactor.

It is found in the cytoplasm. It carries out the reaction 2-deoxy-alpha-D-ribose 1-phosphate = 2-deoxy-D-ribose 5-phosphate. The catalysed reaction is alpha-D-ribose 1-phosphate = D-ribose 5-phosphate. Its pathway is carbohydrate degradation; 2-deoxy-D-ribose 1-phosphate degradation; D-glyceraldehyde 3-phosphate and acetaldehyde from 2-deoxy-alpha-D-ribose 1-phosphate: step 1/2. Its function is as follows. Isomerase that catalyzes the conversion of deoxy-ribose 1-phosphate (dRib-1-P) and ribose 1-phosphate (Rib-1-P) to deoxy-ribose 5-phosphate (dRib-5-P) and ribose 5-phosphate (Rib-5-P), respectively. This chain is Phosphopentomutase, found in Hahella chejuensis (strain KCTC 2396).